An 833-amino-acid chain; its full sequence is Leucine--tRNA ligase (833 aa).

A 'HIGH' region motif is present at residues proline 41–histidine 52. Positions lysine 610 to serine 614 match the 'KMSKS' region motif. An ATP-binding site is contributed by lysine 613.

Belongs to the class-I aminoacyl-tRNA synthetase family.

Its subcellular location is the cytoplasm. The enzyme catalyses tRNA(Leu) + L-leucine + ATP = L-leucyl-tRNA(Leu) + AMP + diphosphate. This chain is Leucine--tRNA ligase, found in Streptococcus thermophilus (strain CNRZ 1066).